The sequence spans 208 residues: Ribosomal RNA small subunit methyltransferase G (208 aa).

S-adenosyl-L-methionine-binding positions include Gly78, Phe83, 101–103 (ERS), 129–130 (IE), and Arg142.

The protein belongs to the methyltransferase superfamily. RNA methyltransferase RsmG family.

It localises to the cytoplasm. Functionally, specifically methylates the N7 position of a guanine in 16S rRNA. In Borreliella burgdorferi (strain ATCC 35210 / DSM 4680 / CIP 102532 / B31) (Borrelia burgdorferi), this protein is Ribosomal RNA small subunit methyltransferase G.